The chain runs to 207 residues: Probable GTP-binding protein EngB (207 aa).

In terms of domain architecture, EngB-type G spans 24–199 (GGYEVAFAGR…RGIVGGWLGL (176 aa)). Residues 32 to 39 (GRSNAGKS), 59 to 63 (GRTQQ), 77 to 80 (DLPG), 144 to 147 (TKAD), and 178 to 180 (YSG) contribute to the GTP site. S39 and T61 together coordinate Mg(2+).

It belongs to the TRAFAC class TrmE-Era-EngA-EngB-Septin-like GTPase superfamily. EngB GTPase family. Mg(2+) serves as cofactor.

Functionally, necessary for normal cell division and for the maintenance of normal septation. The chain is Probable GTP-binding protein EngB from Xanthomonas oryzae pv. oryzae (strain MAFF 311018).